Reading from the N-terminus, the 389-residue chain is Transcription factor MYB97 (389 aa).

HTH myb-type domains follow at residues 16 to 68 (GVVL…ANHL) and 69 to 123 (RPNL…KRFQ). DNA-binding regions (H-T-H motif) lie at residues 44-68 (WNSVQKKTWLARCGKSCRLRWANHL) and 96-119 (WARMAAQLPGRTDNEIKNYWNTRL). Residues 131 to 159 (PPEYSQNNHQQQMYPQQPSSPLPSQTPAS) are disordered. The span at 140 to 159 (QQQMYPQQPSSPLPSQTPAS) shows a compositional bias: low complexity.

In terms of tissue distribution, accumulates in pollen grains and pollen tube. Mostly expressed in mature pollen grains, and, to a lower extent, in inflorescences and siliques.

The protein resides in the nucleus. Functionally, transcription activator. Binds to 5'-CAACTGTC-3' and/or 5'-TAACAAA-3' motif in target gene promoter to promote their expression. Together with MYB101 and MYB120, functions as a male factor that controls pollen tube-synergid interaction in fertilization. Required for pollen tube growth arrest and sperm cell release in the female gametophyte, probably via the regulation of pollen tube-specific gene expression. The polypeptide is Transcription factor MYB97 (Arabidopsis thaliana (Mouse-ear cress)).